Consider the following 479-residue polypeptide: Cysteine protease effector 1 (479 aa).

The sequence is that of Cysteine protease effector 1 from Escherichia coli O1:K1:H7 (strain ATCC 11775 / DSM 30083 / JCM 1649 / NBRC 102203 / NCTC 9001 / U5/41).